The chain runs to 257 residues: Acetyl-coenzyme A carboxylase carboxyl transferase subunit beta 1 (257 aa).

In terms of domain architecture, CoA carboxyltransferase N-terminal spans 1 to 257 (MNINDIFLKR…KMHVNTGGEA (257 aa)).

This sequence belongs to the AccD/PCCB family. As to quaternary structure, acetyl-CoA carboxylase is a heterohexamer composed of biotin carboxyl carrier protein (AccB), biotin carboxylase (AccC) and two subunits each of ACCase subunit alpha (AccA) and ACCase subunit beta (AccD).

The protein localises to the cytoplasm. It catalyses the reaction N(6)-carboxybiotinyl-L-lysyl-[protein] + acetyl-CoA = N(6)-biotinyl-L-lysyl-[protein] + malonyl-CoA. The protein operates within lipid metabolism; malonyl-CoA biosynthesis; malonyl-CoA from acetyl-CoA: step 1/1. In terms of biological role, component of the acetyl coenzyme A carboxylase (ACC) complex. Biotin carboxylase (BC) catalyzes the carboxylation of biotin on its carrier protein (BCCP) and then the CO(2) group is transferred by the transcarboxylase to acetyl-CoA to form malonyl-CoA. The protein is Acetyl-coenzyme A carboxylase carboxyl transferase subunit beta 1 of Lachnospira eligens (strain ATCC 27750 / DSM 3376 / VPI C15-48 / C15-B4) (Eubacterium eligens).